The sequence spans 125 residues: MEVQKIWKSFLNAISKVFSKGKKLRCTCFPKRKKEASERSCFPFLDTETISSCDLSDDVLSPKLFAKNSYRCSLKETKCIDVIVSHNSLAPQFTEIRYTDGISAKAENTDEMTMHIALAPLTENQ.

The protein localises to the golgi apparatus. Functionally, has a role in meiosis. In Schizosaccharomyces pombe (strain 972 / ATCC 24843) (Fission yeast), this protein is Meiotically up-regulated gene 112 protein (mug112).